The sequence spans 187 residues: Putative manganese efflux pump MntP (187 aa).

The next 6 helical transmembrane spans lie at 3–23, 35–55, 56–76, 107–127, 129–149, and 166–186; these read FYSL…VSLC, HYLI…TIGY, FIGI…AFIL, LALA…FAFL, VNLL…CIIA, and LLGG…HLFF.

It belongs to the MntP (TC 9.B.29) family.

The protein localises to the cell inner membrane. In terms of biological role, probably functions as a manganese efflux pump. This chain is Putative manganese efflux pump MntP, found in Campylobacter jejuni subsp. doylei (strain ATCC BAA-1458 / RM4099 / 269.97).